We begin with the raw amino-acid sequence, 60 residues long: Regulatory protein DegR (60 aa).

Functionally, stabilizes the phosphorylated form of DegU, leading to enhanced production of levansucrase, alkaline protease, and neutral protease. The sequence is that of Regulatory protein DegR (degR) from Bacillus subtilis subsp. natto.